Reading from the N-terminus, the 115-residue chain is NADH-ubiquinone oxidoreductase chain 3 (115 aa).

3 helical membrane passes run L3–W23, F55–L75, and L86–W106.

It belongs to the complex I subunit 3 family. As to quaternary structure, core subunit of respiratory chain NADH dehydrogenase (Complex I) which is composed of 45 different subunits. Interacts with TMEM186. Interacts with TMEM242.

The protein localises to the mitochondrion inner membrane. It catalyses the reaction a ubiquinone + NADH + 5 H(+)(in) = a ubiquinol + NAD(+) + 4 H(+)(out). Functionally, core subunit of the mitochondrial membrane respiratory chain NADH dehydrogenase (Complex I) which catalyzes electron transfer from NADH through the respiratory chain, using ubiquinone as an electron acceptor. Essential for the catalytic activity of complex I. This is NADH-ubiquinone oxidoreductase chain 3 from Hylobates lar (Lar gibbon).